Reading from the N-terminus, the 354-residue chain is Guanine nucleotide-binding protein alpha-16 subunit (354 aa).

Residue G2 is the site of N-myristoyl glycine attachment. C3 carries S-palmitoyl cysteine lipidation. One can recognise a G-alpha domain in the interval 31 to 354; that stretch reads KTVKLLLLGA…RDNLRTCGLY (324 aa). The G1 motif stretch occupies residues 34 to 47; that stretch reads KLLLLGAGESGKST. Residues 39 to 46, 174 to 180, 199 to 203, 268 to 271, and A326 each bind GTP; these read GAGESGKS, LRTRIKT, DVGGQ, and NKKD. 2 residues coordinate Mg(2+): S46 and T180. The tract at residues 172-180 is G2 motif; the sequence is DVLRTRIKT. Positions 195-204 are G3 motif; sequence FVVFDVGGQR. The G4 motif stretch occupies residues 264-271; it reads ILFLNKKD. The tract at residues 324–329 is G5 motif; that stretch reads TCATDT.

This sequence belongs to the G-alpha family. G proteins are composed of 3 units; alpha, beta and gamma. The alpha chain contains the guanine nucleotide binding site.

Its function is as follows. Guanine nucleotide-binding proteins (G proteins) are involved as modulators or transducers in various transmembrane signaling systems. In the 1-cell embryo, probably together with goa-1, controls nuclear rotation and spindle elongation during mitosis. During the first embryonic cell divisons, plays a role in gpr-1/2 cortical localization and in the proper orientation of EMS blastomere mitotic spindle. In Caenorhabditis briggsae, this protein is Guanine nucleotide-binding protein alpha-16 subunit (gpa-16).